The primary structure comprises 558 residues: Proline--tRNA ligase (558 aa).

It belongs to the class-II aminoacyl-tRNA synthetase family. ProS type 1 subfamily. As to quaternary structure, homodimer.

The protein resides in the cytoplasm. It carries out the reaction tRNA(Pro) + L-proline + ATP = L-prolyl-tRNA(Pro) + AMP + diphosphate. Its function is as follows. Catalyzes the attachment of proline to tRNA(Pro) in a two-step reaction: proline is first activated by ATP to form Pro-AMP and then transferred to the acceptor end of tRNA(Pro). As ProRS can inadvertently accommodate and process non-cognate amino acids such as alanine and cysteine, to avoid such errors it has two additional distinct editing activities against alanine. One activity is designated as 'pretransfer' editing and involves the tRNA(Pro)-independent hydrolysis of activated Ala-AMP. The other activity is designated 'posttransfer' editing and involves deacylation of mischarged Ala-tRNA(Pro). The misacylated Cys-tRNA(Pro) is not edited by ProRS. The polypeptide is Proline--tRNA ligase (Coprothermobacter proteolyticus (strain ATCC 35245 / DSM 5265 / OCM 4 / BT)).